The sequence spans 255 residues: Hydroxyacylglutathione hydrolase (255 aa).

Positions 56, 58, 60, 61, 114, 133, and 171 each coordinate Zn(2+).

It belongs to the metallo-beta-lactamase superfamily. Glyoxalase II family. In terms of assembly, monomer. Requires Zn(2+) as cofactor.

The catalysed reaction is an S-(2-hydroxyacyl)glutathione + H2O = a 2-hydroxy carboxylate + glutathione + H(+). Its pathway is secondary metabolite metabolism; methylglyoxal degradation; (R)-lactate from methylglyoxal: step 2/2. Functionally, thiolesterase that catalyzes the hydrolysis of S-D-lactoyl-glutathione to form glutathione and D-lactic acid. The polypeptide is Hydroxyacylglutathione hydrolase (Fuscovulum blasticum (Rhodobacter blasticus)).